The sequence spans 1300 residues: Kinesin-like protein KIN-4C (1300 aa).

A Kinesin motor domain is found at 6 to 360; that stretch reads CVRVAVNIRP…LKYANRARNI (355 aa). 85–92 contacts ATP; the sequence is GQTGSGKT. Coiled coils occupy residues 580–615, 653–697, and 781–823; these read TSVL…LASI, QLMR…RAWK, and EVTV…AKIS. Basic and acidic residues-rich tracts occupy residues 956–971 and 1001–1013; these read ADEN…KQET and EWKP…RESE. Disordered regions lie at residues 956-1018, 1097-1132, 1144-1187, and 1200-1300; these read ADEN…ESVI, NADG…QQQV, ALAD…RKKW, and PALP…TRRV. 4 stretches are compositionally biased toward polar residues: residues 1169–1180, 1205–1222, 1230–1239, and 1275–1288; these read IGNTTGKSNVPR, THTN…TVDS, NSDSGESNSI, and GFVQ…SGSR. The segment covering 1289-1300 has biased composition (basic and acidic residues); the sequence is TSDEKENHTRRV.

This sequence belongs to the TRAFAC class myosin-kinesin ATPase superfamily. Kinesin family. KIN-4 subfamily. In terms of assembly, homodimer.

In terms of biological role, kinesin-like motor protein involved in the control of the oriented deposition of cellulose microfibrils. This is Kinesin-like protein KIN-4C from Arabidopsis thaliana (Mouse-ear cress).